The sequence spans 312 residues: Methionyl-tRNA formyltransferase (312 aa).

117–120 is a (6S)-5,6,7,8-tetrahydrofolate binding site; that stretch reads SLLP.

This sequence belongs to the Fmt family.

It catalyses the reaction L-methionyl-tRNA(fMet) + (6R)-10-formyltetrahydrofolate = N-formyl-L-methionyl-tRNA(fMet) + (6S)-5,6,7,8-tetrahydrofolate + H(+). Attaches a formyl group to the free amino group of methionyl-tRNA(fMet). The formyl group appears to play a dual role in the initiator identity of N-formylmethionyl-tRNA by promoting its recognition by IF2 and preventing the misappropriation of this tRNA by the elongation apparatus. The protein is Methionyl-tRNA formyltransferase of Bordetella pertussis (strain Tohama I / ATCC BAA-589 / NCTC 13251).